Consider the following 300-residue polypeptide: Protoheme IX farnesyltransferase (300 aa).

Transmembrane regions (helical) follow at residues 20–40 (ITKM…YFLG), 43–63 (TIDF…VGAS), 94–114 (PVAF…LYVI), 116–136 (PKTA…YTPL), 142–162 (LSVF…WVAA), 173–193 (LFMI…WWLF), 215–235 (IQII…VFGV), 241–261 (LTPV…YYAI), and 276–296 (MFAS…DKFI).

The protein belongs to the UbiA prenyltransferase family. Protoheme IX farnesyltransferase subfamily.

The protein localises to the cell membrane. The catalysed reaction is heme b + (2E,6E)-farnesyl diphosphate + H2O = Fe(II)-heme o + diphosphate. Its pathway is porphyrin-containing compound metabolism; heme O biosynthesis; heme O from protoheme: step 1/1. Its function is as follows. Converts heme B (protoheme IX) to heme O by substitution of the vinyl group on carbon 2 of heme B porphyrin ring with a hydroxyethyl farnesyl side group. This chain is Protoheme IX farnesyltransferase, found in Christiangramia forsetii (strain DSM 17595 / CGMCC 1.15422 / KT0803) (Gramella forsetii).